The chain runs to 160 residues: Transcription elongation factor GreA (160 aa).

Residues 1–72 adopt a coiled-coil conformation; sequence MAEKTYPMTL…QISSLETKIR (72 aa).

The protein belongs to the GreA/GreB family.

In terms of biological role, necessary for efficient RNA polymerase transcription elongation past template-encoded arresting sites. The arresting sites in DNA have the property of trapping a certain fraction of elongating RNA polymerases that pass through, resulting in locked ternary complexes. Cleavage of the nascent transcript by cleavage factors such as GreA or GreB allows the resumption of elongation from the new 3'terminus. GreA releases sequences of 2 to 3 nucleotides. This Streptococcus sanguinis (strain SK36) protein is Transcription elongation factor GreA.